Here is a 511-residue protein sequence, read N- to C-terminus: AMP phosphorylase (511 aa).

Residues Gly-168, 194 to 199 (SRAITS), and Thr-203 each bind AMP. Asp-256 acts as the Proton donor in catalysis. AMP contacts are provided by Ser-262 and Lys-286.

Belongs to the thymidine/pyrimidine-nucleoside phosphorylase family. Type 2 subfamily.

The enzyme catalyses AMP + phosphate = alpha-D-ribose 1,5-bisphosphate + adenine. It catalyses the reaction CMP + phosphate = cytosine + alpha-D-ribose 1,5-bisphosphate. The catalysed reaction is UMP + phosphate = alpha-D-ribose 1,5-bisphosphate + uracil. Its function is as follows. Catalyzes the conversion of AMP and phosphate to adenine and ribose 1,5-bisphosphate (R15P). Exhibits phosphorylase activity toward CMP and UMP in addition to AMP. Functions in an archaeal AMP degradation pathway, together with R15P isomerase and RubisCO. The chain is AMP phosphorylase from Thermofilum pendens (strain DSM 2475 / Hrk 5).